The primary structure comprises 460 residues: Lipase member H-B (460 aa).

The first 26 residues, 1–26 (MLLSFYFNGLLLVGCLLSWGRSDTEG), serve as a signal peptide directing secretion. Residues Asn-67 and Asn-75 are each glycosylated (N-linked (GlcNAc...) asparagine). Residue Ser-163 is the Nucleophile of the active site. A glycan (N-linked (GlcNAc...) asparagine) is linked at Asn-177. Asp-187 functions as the Charge relay system in the catalytic mechanism. Cys-242 and Cys-255 are disulfide-bonded. Catalysis depends on His-257, which acts as the Charge relay system. 2 disulfide bridges follow: Cys-279-Cys-290 and Cys-293-Cys-301. Residue Asn-289 is glycosylated (N-linked (GlcNAc...) asparagine). The N-linked (GlcNAc...) asparagine glycan is linked to Asn-366. A disulfide bridge links Cys-436 with Cys-455.

This sequence belongs to the AB hydrolase superfamily. Lipase family.

The protein localises to the secreted. It localises to the cell membrane. It catalyses the reaction 1-hexadecanoyl-2-(9Z-octadecenoyl)-sn-glycero-3-phosphate + H2O = 2-(9Z-octadecenoyl)-sn-glycero-3-phosphate + hexadecanoate + H(+). In terms of biological role, hydrolyzes specifically phosphatidic acid (PA) to produce 2-acyl lysophosphatidic acid (LPA; a potent bioactive lipid mediator) and fatty acid. Does not hydrolyze other phospholipids, like phosphatidylserine (PS), phosphatidylcholine (PC) and phosphatidylethanolamine (PE) or triacylglycerol (TG). The protein is Lipase member H-B (liph-b) of Xenopus laevis (African clawed frog).